A 1495-amino-acid chain; its full sequence is Collagen alpha-1(XVII) chain (1495 aa).

Over residues 1-17 (MDSVTKKTRQDGSEVTE) the composition is skewed to basic and acidic residues. Residues 1–138 (MDSVTKKTRQ…VRLQSASPSG (138 aa)) form a disordered region. Over 1-435 (MDSVTKKTRQ…CGSCCSWWKW (435 aa)) the chain is Cytoplasmic. The segment at 1–535 (MDSVTKKTRQ…IERGYFRGER (535 aa)) is nonhelical region (NC16). Polar residues predominate over residues 19–32 (QGGSSSGLKTSSHT). The span at 51–63 (SSGSGRLNSSSSG) shows a compositional bias: low complexity. Composition is skewed to polar residues over residues 64–80 (YRQT…SPGS) and 95–104 (EGSSSANSSP). The chain crosses the membrane as a helical; Signal-anchor for type II membrane protein span at residues 436–456 (LLGLLLAWLLLLGLLFGLIAL). Residues 457-1495 (AEEVRKLKSR…GRRRRRSVGV (1039 aa)) lie on the Extracellular side of the membrane. Disordered regions lie at residues 532 to 824 (RGER…EKGS), 847 to 999 (DLQG…SSSQ), 1160 to 1185 (EFSG…SSGI), 1201 to 1226 (SISG…TGLL), 1251 to 1278 (RSYI…LVAG), 1295 to 1336 (GGSI…GSYG), and 1396 to 1416 (MSYT…PGIS). Residues 536 to 1482 (GEPGMKGDMG…KGEKGEKGEQ (947 aa)) are triple-helical region. 2 stretches are compositionally biased toward low complexity: residues 702-711 (PGAKGPAGQA) and 761-773 (RPGA…APGK). A compositionally biased stretch (pro residues) spans 786–807 (PGPPGPPGPIGPTGPPGVPGPV). Positions 809–818 (PAGLPGQQGP) are enriched in low complexity. Pro residues-rich tracts occupy residues 871 to 886 (PRGP…PPGR), 901 to 910 (PPGPPGPPGP), 946 to 955 (PPGPPGPPGP), 981 to 993 (PPGP…PPGP), 1167 to 1179 (PPGP…PPGI), 1208 to 1218 (PPGPPGPPGPP), and 1257 to 1269 (PPGP…PPGP). A compositionally biased stretch (gly residues) spans 1296–1308 (GSIGAEGSHGGSL). Over residues 1309–1336 (GASSSYGSSMSSSMSSYSASMGSDGSYG) the composition is skewed to low complexity. Pro residues predominate over residues 1403 to 1413 (PPGPPGPPGPP). Asn-1424 carries an N-linked (GlcNAc...) asparagine glycan. The interval 1435-1495 (THGTVRGPPG…GRRRRRSVGV (61 aa)) is disordered. The span at 1472–1481 (PKGEKGEKGE) shows a compositional bias: basic and acidic residues. Positions 1483–1495 (MYSGRRRRRSVGV) are nonhelical region (NC1). A compositionally biased stretch (basic residues) spans 1486-1495 (GRRRRRSVGV).

In terms of assembly, homotrimers of alpha 1(XVII)chains. The intracellular/endo domain is disulfide-linked. Post-translationally, prolines at the third position of the tripeptide repeating unit (G-X-Y) are hydroxylated in some or all of the chains. In terms of processing, the ectodomain is shedded from the surface of keratinocytes resulting in a 120-kDa soluble form, also named as 120 kDa linear IgA disease antigen homolog. The shedding is mediated by membrane-bound metalloproteases. Cornea specific.

The protein resides in the cell junction. It is found in the hemidesmosome. The protein localises to the membrane. Its subcellular location is the secreted. It localises to the extracellular space. The protein resides in the extracellular matrix. It is found in the basement membrane. Functionally, may play a role in the integrity of hemidesmosome and the attachment of basal keratinocytes to the underlying basement membrane. Its function is as follows. The 120 kDa linear IgA disease antigen homolog is an anchoring filament component involved in dermal-epidermal cohesion. The polypeptide is Collagen alpha-1(XVII) chain (COL17A1) (Gallus gallus (Chicken)).